We begin with the raw amino-acid sequence, 159 residues long: Phosphopantetheine adenylyltransferase (159 aa).

Thr-10 is a binding site for substrate. ATP-binding positions include 10–11 (TF) and His-18. 3 residues coordinate substrate: Lys-42, Met-74, and Arg-88. ATP is bound by residues 89–91 (GLR), Glu-99, and 124–130 (WSFISSS).

Belongs to the bacterial CoaD family. As to quaternary structure, homohexamer. Mg(2+) serves as cofactor.

Its subcellular location is the cytoplasm. It carries out the reaction (R)-4'-phosphopantetheine + ATP + H(+) = 3'-dephospho-CoA + diphosphate. It functions in the pathway cofactor biosynthesis; coenzyme A biosynthesis; CoA from (R)-pantothenate: step 4/5. Its function is as follows. Reversibly transfers an adenylyl group from ATP to 4'-phosphopantetheine, yielding dephospho-CoA (dPCoA) and pyrophosphate. The chain is Phosphopantetheine adenylyltransferase from Yersinia enterocolitica serotype O:8 / biotype 1B (strain NCTC 13174 / 8081).